A 101-amino-acid chain; its full sequence is Small ribosomal subunit protein uS14 (101 aa).

It belongs to the universal ribosomal protein uS14 family. In terms of assembly, part of the 30S ribosomal subunit. Contacts proteins S3 and S10.

Binds 16S rRNA, required for the assembly of 30S particles and may also be responsible for determining the conformation of the 16S rRNA at the A site. The sequence is that of Small ribosomal subunit protein uS14 from Ectopseudomonas mendocina (strain ymp) (Pseudomonas mendocina).